The chain runs to 528 residues: Cytochrome P450 monooxygenase vrcB (528 aa).

A helical membrane pass occupies residues 5-27; that stretch reads YGLFFAAVALYSVALVIYRLYLH. Residue Cys-470 coordinates heme.

The protein belongs to the cytochrome P450 family. Requires heme as cofactor.

The protein resides in the membrane. It catalyses the reaction variecoladiene + 4 reduced [NADPH--hemoprotein reductase] + 4 O2 = variecolin + 4 oxidized [NADPH--hemoprotein reductase] + 6 H2O + 4 H(+). It participates in secondary metabolite biosynthesis; terpenoid biosynthesis. In terms of biological role, cytochrome P450 monooxygenase; part of the gene cluster that mediates the biosynthesis of the sesterterpene variecolin. The first step in the pathway is performed by the variecoladiene synthase vrcA that possesses both prenyl transferase and terpene cyclase activity, converting isopentenyl diphosphate and dimethylallyl diphosphate into geranylfarnesyl pyrophosphate (GFPP) and then converting GFPP into the tetracyclic variecoladiene. The cytochrome P450 monooxygenase vrcB then catalyzes multiple oxidations at C-5 and C-20 positions to yield variecolin. This Aspergillus aculeatus (strain ATCC 16872 / CBS 172.66 / WB 5094) protein is Cytochrome P450 monooxygenase vrcB.